The chain runs to 2375 residues: Talin-2 (2375 aa).

The region spanning 88–406 is the FERM domain; sequence RPQKIRMLDG…GYIDIILKKK (319 aa). An interaction with PIP5K1C region spans residues 312-406; the sequence is GVSFFLVKEK…GYIDIILKKK (95 aa). 4 positions are modified to phosphoserine: Ser-428, Ser-450, Ser-624, and Ser-1024. Tyr-1666 carries the phosphotyrosine modification. Positions 2205–2375 constitute an I/LWEQ domain; it reads TEWVDPEDPT…KRLQAAGNAV (171 aa).

Interacts directly with PIP5K1C.

Its subcellular location is the cytoplasm. The protein localises to the cell junction. It localises to the focal adhesion. It is found in the synapse. The protein resides in the cell membrane. Its subcellular location is the cytoskeleton. Its function is as follows. As a major component of focal adhesion plaques that links integrin to the actin cytoskeleton, may play an important role in cell adhesion. Recruits PIP5K1C to focal adhesion plaques and strongly activates its kinase activity. The polypeptide is Talin-2 (Tln2) (Mus musculus (Mouse)).